We begin with the raw amino-acid sequence, 156 residues long: Small ribosomal subunit protein uS7 (156 aa).

Belongs to the universal ribosomal protein uS7 family. Part of the 30S ribosomal subunit. Contacts proteins S9 and S11.

In terms of biological role, one of the primary rRNA binding proteins, it binds directly to 16S rRNA where it nucleates assembly of the head domain of the 30S subunit. Is located at the subunit interface close to the decoding center, probably blocks exit of the E-site tRNA. The polypeptide is Small ribosomal subunit protein uS7 (Methylorubrum extorquens (strain CM4 / NCIMB 13688) (Methylobacterium extorquens)).